Reading from the N-terminus, the 1092-residue chain is Elongation factor 3 (1092 aa).

Residue Val92 participates in ADP binding. 7 HEAT repeats span residues 95–133 (MVKT…SPVS), 138–175 (PYMI…RLTP), 177–214 (ATKQ…TAPR), 218–255 (TAVP…LINN), 257–293 (DIEK…EVLP), 294–331 (PTLA…LVEK), and 333–370 (QIIA…KILT). Glu454 provides a ligand contact to ADP. ABC transporter domains lie at 486-704 (EELC…YYEL) and 730-1044 (LKVQ…DKNK). ADP is bound by residues Asn766, Glu973, Asn976, and His1002. Disordered stretches follow at residues 1023–1044 (TPTG…DKNK) and 1063–1092 (SKLS…DDDE). Residues 1063–1075 (SKLSGKDLRKKRK) are compositionally biased toward basic residues. Residues 1076–1086 (EREARRKRGEE) are compositionally biased toward basic and acidic residues.

This sequence belongs to the ABC transporter superfamily. ABCF family. EF3 subfamily.

It is found in the cytoplasm. Its subcellular location is the cytosol. The catalysed reaction is ATP + H2O = ADP + phosphate + H(+). Its pathway is protein biosynthesis; polypeptide chain elongation. In terms of biological role, ribosome-dependent ATPase that functions in cytoplasmic translation elongation. Required for the ATP-dependent release of deacylated tRNA from the ribosomal E-site during protein biosynthesis. Stimulates the eEF1A-dependent binding of aminoacyl-tRNA to the ribosomal A-site, which has reduced affinity for tRNA as long as the E-site is occupied. Assists translation termination by stimulating the release of nascent protein from the ribosome by release factors. This Gonapodya prolifera (strain JEL478) (Monoblepharis prolifera) protein is Elongation factor 3.